The following is a 210-amino-acid chain: Large ribosomal subunit protein uL3 (210 aa).

The protein belongs to the universal ribosomal protein uL3 family. In terms of assembly, part of the 50S ribosomal subunit. Forms a cluster with proteins L14 and L19.

In terms of biological role, one of the primary rRNA binding proteins, it binds directly near the 3'-end of the 23S rRNA, where it nucleates assembly of the 50S subunit. The sequence is that of Large ribosomal subunit protein uL3 from Geobacter sulfurreducens (strain ATCC 51573 / DSM 12127 / PCA).